The primary structure comprises 1164 residues: DNA-directed RNA polymerase subunit beta (1164 aa).

The protein belongs to the RNA polymerase beta chain family. The RNAP catalytic core consists of 2 alpha, 1 beta, 1 beta' and 1 omega subunit. When a sigma factor is associated with the core the holoenzyme is formed, which can initiate transcription.

The enzyme catalyses RNA(n) + a ribonucleoside 5'-triphosphate = RNA(n+1) + diphosphate. DNA-dependent RNA polymerase catalyzes the transcription of DNA into RNA using the four ribonucleoside triphosphates as substrates. The sequence is that of DNA-directed RNA polymerase subunit beta from Saccharopolyspora erythraea (strain ATCC 11635 / DSM 40517 / JCM 4748 / NBRC 13426 / NCIMB 8594 / NRRL 2338).